We begin with the raw amino-acid sequence, 46 residues long: Major cold-shock protein (46 aa).

Positions 1–46 (EKGFGFISPADGSKDVFVHFSAIQSTSFKTLDEGQRVEFTIEQGQK) constitute a CSD domain.

In terms of assembly, homodimer.

The protein localises to the cytoplasm. In Aeromonas salmonicida, this protein is Major cold-shock protein (cspA).